A 999-amino-acid polypeptide reads, in one-letter code: Hypoxia up-regulated protein 1 (999 aa).

Residues 1-32 (MAATVRRQRPRRLLCWALVAVLLADLLALSDT) form the signal peptide. N-linked (GlcNAc...) asparagine glycosylation is found at N155, N222, and N515. Residue S567 is modified to Phosphoserine. Positions 567 to 694 (SPEEESTLTK…KKPKPARKQK (128 aa)) are disordered. The span at 574 to 583 (LTKLGNTISS) shows a compositional bias: polar residues. N596 is a glycosylation site (N-linked (GlcNAc...) asparagine). Basic and acidic residues-rich tracts occupy residues 611 to 626 (GSKD…KEEA) and 641 to 668 (PKGD…KPNE). The segment covering 669-680 (KGQAGPEGAAPA) has biased composition (low complexity). N830, N862, and N869 each carry an N-linked (GlcNAc...) asparagine glycan. K883 is modified (N6-acetyllysine). A disordered region spans residues 909–999 (AKFTKPRPRP…QKRPSKNDEL (91 aa)). Residues N922 and N931 are each glycosylated (N-linked (GlcNAc...) asparagine). Over residues 949 to 962 (EEAKPILEPDKEET) the composition is skewed to basic and acidic residues. Positions 996 to 999 (NDEL) match the Prevents secretion from ER motif.

Belongs to the heat shock protein 70 family. As to quaternary structure, part of a large chaperone multiprotein complex comprising DNAJB11, HSP90B1, HSPA5, HYOU, PDIA2, PDIA4, PDIA6, PPIB, SDF2L1, UGGT1 and very small amounts of ERP29, but not, or at very low levels, CALR nor CANX.

It is found in the endoplasmic reticulum lumen. Has a pivotal role in cytoprotective cellular mechanisms triggered by oxygen deprivation. Promotes HSPA5/BiP-mediated ATP nucleotide exchange and thereby activates the unfolded protein response (UPR) pathway in the presence of endoplasmic reticulum stress. May play a role as a molecular chaperone and participate in protein folding. This chain is Hypoxia up-regulated protein 1 (Hyou1), found in Mus musculus (Mouse).